A 506-amino-acid polypeptide reads, in one-letter code: MSLLLEAERYVANQSSNRMLNAFITPLCRHSGRWHDQAKDADIRGKQGKLRSRLDGRFIAFKDNICTRDFPTTCASKSLDTFTSPFNATVVQQLEDAGAIVAGKTNLDEFGMGSHSIYSSFGHVMNTRRGDDSKFLSAGGSSGGNAVAVATDQCYAALGTDTGGSIRLPAAYTGTVGFKPSYGLLSRWGVIAYANSLDTVGILAKRVSVARDVFDVLNKHDPRDPTSISPSSRSRISSKLNLPQLTSRLTSRPLRIGIPLEYNISELAPSVRQAWCHSLEYLRQQGHTIQPVSLPMTKLALSAYYVLAPAEASSNLAKYDGVRYGTRSDDSTENQSETYLYAKTRGAGFGPEVKRRIMLGAFSLSAQAIDNYFIQAQRIRRLVRHDFDAAFQAEHPLAAEIRNVELRQQAKQTGIDVLISPTAPTPPPTISDITDTSTKRSNLDAYINDVFTVPASLAGLPAISVPVSGKDNAGNQEGDILAGIQVIGQYGDDELVLKVGELLERR.

Active-site charge relay system residues include Lys-62 and Ser-141. Residue Ser-165 is the Acyl-ester intermediate of the active site.

The protein belongs to the amidase family. GatA subfamily. As to quaternary structure, subunit of the heterotrimeric GatCAB amidotransferase (AdT) complex, composed of A, B and C subunits.

The protein resides in the mitochondrion. It catalyses the reaction L-glutamyl-tRNA(Gln) + L-glutamine + ATP + H2O = L-glutaminyl-tRNA(Gln) + L-glutamate + ADP + phosphate + H(+). In terms of biological role, allows the formation of correctly charged Gln-tRNA(Gln) through the transamidation of misacylated Glu-tRNA(Gln) in the mitochondria. The reaction takes place in the presence of glutamine and ATP through an activated gamma-phospho-Glu-tRNA(Gln). This is Glutamyl-tRNA(Gln) amidotransferase subunit A, mitochondrial from Emericella nidulans (strain FGSC A4 / ATCC 38163 / CBS 112.46 / NRRL 194 / M139) (Aspergillus nidulans).